The sequence spans 460 residues: Dynactin subunit 4 (460 aa).

Position 2 is an N-acetylalanine (alanine 2). Residues 152-172 (QQLAQKEKVERDRKKLARRRN) adopt a coiled-coil conformation. Serine 196 bears the Phosphoserine mark. A Glycyl lysine isopeptide (Lys-Gly) (interchain with G-Cter in SUMO2) cross-link involves residue lysine 215. Threonine 407 carries the phosphothreonine modification.

This sequence belongs to the dynactin subunit 4 family. Subunit of dynactin, a multiprotein complex part of a tripartite complex with dynein and a adapter, such as BICDL1, BICD2 or HOOK3. The dynactin complex is built around ACTR1A/ACTB filament and consists of an actin-related filament composed of a shoulder domain, a pointed end and a barbed end. Its length is defined by its flexible shoulder domain. The soulder is composed of 2 DCTN1 subunits, 4 DCTN2 and 2 DCTN3. The 4 DCNT2 (via N-terminus) bind the ACTR1A filament and act as molecular rulers to determine the length. The pointed end is important for binding dynein-dynactin cargo adapters. Consists of 4 subunits: ACTR10, DCNT4, DCTN5 and DCTN6. The barbed end is composed of a CAPZA1:CAPZB heterodimers, which binds ACTR1A/ACTB filament and dynactin and stabilizes dynactin. Interacts with ATP7B, but not ATP7A, in a copper-dependent manner. Interacts with ANK2; this interaction is required for localization at costameres. Interacts with N4BP2L1.

The protein resides in the cytoplasm. It is found in the cytoskeleton. Its subcellular location is the microtubule organizing center. It localises to the centrosome. The protein localises to the stress fiber. The protein resides in the cell cortex. It is found in the myofibril. Its subcellular location is the sarcomere. Functionally, part of the dynactin complex that activates the molecular motor dynein for ultra-processive transport along microtubules. This is Dynactin subunit 4 from Homo sapiens (Human).